The following is a 109-amino-acid chain: Protein reprimo (109 aa).

N-linked (GlcNAc...) asparagine glycans are attached at residues asparagine 7 and asparagine 18. The helical transmembrane segment at 56–76 (VVQIAVMCVLSLTVVFGIFFL) threads the bilayer. At serine 98 the chain carries Phosphoserine.

Belongs to the reprimo family.

The protein localises to the cytoplasm. It is found in the membrane. Its function is as follows. May be involved in the regulation of p53-dependent G2 arrest of the cell cycle. Seems to induce cell cycle arrest by inhibiting CDK1 activity and nuclear translocation of the CDC2 cyclin B1 complex. This chain is Protein reprimo (Rprm), found in Rattus norvegicus (Rat).